The sequence spans 348 residues: Olfactory receptor 2T4 (348 aa).

At methionine 1 to alanine 57 the chain is on the extracellular side. Asparagine 31 and asparagine 37 each carry an N-linked (GlcNAc...) asparagine glycan. Residues leucine 58–isoleucine 81 traverse the membrane as a helical segment. Residues histidine 82–threonine 89 lie on the Cytoplasmic side of the membrane. A helical membrane pass occupies residues proline 90–proline 111. Residues lysine 112–glutamine 132 are Extracellular-facing. Cysteine 129 and cysteine 221 form a disulfide bridge. A helical membrane pass occupies residues methionine 133–tyrosine 152. Residues aspartate 153–arginine 171 lie on the Cytoplasmic side of the membrane. Residues valine 172–threonine 190 form a helical membrane-spanning segment. Over phenylalanine 191 to tyrosine 227 the chain is Extracellular. Asparagine 218 is a glycosylation site (N-linked (GlcNAc...) asparagine). A helical membrane pass occupies residues glutamate 228 to leucine 251. At leucine 252–lysine 268 the chain is on the cytoplasmic side. A helical transmembrane segment spans residues alanine 269–tyrosine 291. The Extracellular portion of the chain corresponds to methionine 292–methionine 304. The chain crosses the membrane as a helical span at residues methionine 305–leucine 324. Over arginine 325 to glutamate 348 the chain is Cytoplasmic.

This sequence belongs to the G-protein coupled receptor 1 family.

The protein resides in the cell membrane. Its function is as follows. Odorant receptor. The sequence is that of Olfactory receptor 2T4 (OR2T4) from Homo sapiens (Human).